Reading from the N-terminus, the 565-residue chain is Sulfite reductase [NADPH] hemoprotein beta-component (565 aa).

Positions 429, 435, 474, and 478 each coordinate [4Fe-4S] cluster. A siroheme-binding site is contributed by Cys478.

Belongs to the nitrite and sulfite reductase 4Fe-4S domain family. In terms of assembly, alpha(8)-beta(8). The alpha component is a flavoprotein, the beta component is a hemoprotein. It depends on siroheme as a cofactor. [4Fe-4S] cluster is required as a cofactor.

The enzyme catalyses hydrogen sulfide + 3 NADP(+) + 3 H2O = sulfite + 3 NADPH + 4 H(+). The protein operates within sulfur metabolism; hydrogen sulfide biosynthesis; hydrogen sulfide from sulfite (NADPH route): step 1/1. In terms of biological role, component of the sulfite reductase complex that catalyzes the 6-electron reduction of sulfite to sulfide. This is one of several activities required for the biosynthesis of L-cysteine from sulfate. The polypeptide is Sulfite reductase [NADPH] hemoprotein beta-component (Shewanella baltica (strain OS185)).